A 353-amino-acid polypeptide reads, in one-letter code: tRNA-splicing endonuclease (353 aa).

Catalysis depends on residues tyrosine 289, histidine 300, and lysine 331.

Belongs to the tRNA-intron endonuclease family. Archaeal long subfamily. In terms of assembly, homodimer.

It catalyses the reaction pretRNA = a 3'-half-tRNA molecule with a 5'-OH end + a 5'-half-tRNA molecule with a 2',3'-cyclic phosphate end + an intron with a 2',3'-cyclic phosphate and a 5'-hydroxyl terminus.. Functionally, endonuclease that removes tRNA introns. Cleaves pre-tRNA at the 5'- and 3'-splice sites to release the intron. The products are an intron and two tRNA half-molecules bearing 2',3' cyclic phosphate and 5'-OH termini. Recognizes a pseudosymmetric substrate in which 2 bulged loops of 3 bases are separated by a stem of 4 bp. The sequence is that of tRNA-splicing endonuclease from Methanosarcina mazei (strain ATCC BAA-159 / DSM 3647 / Goe1 / Go1 / JCM 11833 / OCM 88) (Methanosarcina frisia).